The chain runs to 145 residues: Transcription antitermination protein NusB (145 aa).

The protein belongs to the NusB family.

Involved in transcription antitermination. Required for transcription of ribosomal RNA (rRNA) genes. Binds specifically to the boxA antiterminator sequence of the ribosomal RNA (rrn) operons. This is Transcription antitermination protein NusB from Geobacter sp. (strain M21).